The chain runs to 363 residues: Probable iron/ascorbate oxidoreductase DDB_G0283291 (363 aa).

Positions 197-306 constitute a Fe2OG dioxygenase domain; it reads IFNYPSIISS…RISFPLFFDP (110 aa). H230, D232, and H286 together coordinate Fe cation. R297 serves as a coordination point for 2-oxoglutarate.

Belongs to the iron/ascorbate-dependent oxidoreductase family. It depends on Fe(2+) as a cofactor.

This Dictyostelium discoideum (Social amoeba) protein is Probable iron/ascorbate oxidoreductase DDB_G0283291.